Here is a 309-residue protein sequence, read N- to C-terminus: Succinoglycan biosynthesis protein ExoM (309 aa).

This sequence belongs to the glycosyltransferase 2 family.

The protein localises to the cell inner membrane. It functions in the pathway glycan metabolism; exopolysaccharide biosynthesis. Its function is as follows. Glycosyltransferase required for the synthesis of succinoglycan (EPS I). Needed for the addition of the fourth sugar (glucose), catalyzes the formation of a beta-1,4 linkage between the third acetylated sugar and the fourth sugar. This Rhizobium meliloti (strain 1021) (Ensifer meliloti) protein is Succinoglycan biosynthesis protein ExoM (exoM).